The chain runs to 91 residues: Small ribosomal subunit protein uS15 (91 aa).

Belongs to the universal ribosomal protein uS15 family. Part of the 30S ribosomal subunit. Forms a bridge to the 50S subunit in the 70S ribosome, contacting the 23S rRNA.

Its function is as follows. One of the primary rRNA binding proteins, it binds directly to 16S rRNA where it helps nucleate assembly of the platform of the 30S subunit by binding and bridging several RNA helices of the 16S rRNA. Functionally, forms an intersubunit bridge (bridge B4) with the 23S rRNA of the 50S subunit in the ribosome. The polypeptide is Small ribosomal subunit protein uS15 (Sulfurimonas denitrificans (strain ATCC 33889 / DSM 1251) (Thiomicrospira denitrificans (strain ATCC 33889 / DSM 1251))).